Reading from the N-terminus, the 1000-residue chain is Sop-2-related protein 1 (1000 aa).

Disordered regions lie at residues 355–374, 379–422, and 466–509; these read KIMK…QYQQ, HQQH…GPSE, and APSE…VARG. The segment covering 390–404 has biased composition (low complexity); the sequence is SSSSVPSTSSPSCSS. Residues 406-415 are compositionally biased toward basic and acidic residues; that stretch reads ANRKEMETVR. A compositionally biased stretch (low complexity) spans 489 to 502; the sequence is GPSQQQQIPGTSQQ. An RNA-binding region spans residues 633–720; sequence REQILPQQYM…LNTSSVQPSE (88 aa). Residues 948 to 1000 are disordered; sequence HRMHSQRPPSMGNSSTSSEASSTSPTNAATATSSPASNRPTTSTAQPPTLNPT. Low complexity predominate over residues 960-992; that stretch reads NSSTSSEASSTSPTNAATATSSPASNRPTTSTA.

Binds through its N-terminal region to the N-terminal region of sop-2.

It is found in the nucleus. In terms of biological role, acts synergistically with sop-2 to maintain the transcriptionally repressive state of homeotic genes throughout development. Not required to initiate repression, but to maintain it during later stages of development. Also required to repress expression of other genes. Binds RNA in a sequence-independent manner. The protein is Sop-2-related protein 1 (sor-1) of Caenorhabditis elegans.